The primary structure comprises 991 residues: Pentatricopeptide repeat-containing protein At1g73710 (991 aa).

2 disordered regions span residues 1 to 27 (MLQP…HHHH) and 61 to 81 (SSSS…RKRK). Residues 15-27 (VRHHHHHHHHHHH) show a composition bias toward basic residues. Residues 61–73 (SSSSVSPPRCSKP) are compositionally biased toward low complexity. PPR repeat units follow at residues 144 to 178 (NVIH…GVLP), 179 to 213 (TNNT…MHFP), 214 to 248 (DEVT…KVDL), 304 to 338 (LTST…GVPI), 339 to 373 (DTVT…GISP), 374 to 408 (DTKT…GLFP), 409 to 443 (DTVT…SIRI), 444 to 474 (DEHS…FQLD), 478 to 513 (SSTT…GQRN), 514 to 548 (DVLE…GTWP), 549 to 583 (DECT…GCKP), 584 to 618 (GCKT…GVKP), 619 to 653 (NEVV…GVQS), 654 to 688 (NHIV…EGGP), 689 to 719 (DVAA…LREK), 723 to 757 (DVIS…GLLS), 758 to 792 (DCTS…RKLL), 862 to 896 (EHFA…GLEP), and 897 to 931 (DIVT…ELEP). The span at 965–974 (AERECSSRSG) shows a compositional bias: basic and acidic residues. Residues 965 to 991 (AERECSSRSGEEEEDDEEENSEEDEAF) are disordered. Residues 975 to 991 (EEEEDDEEENSEEDEAF) show a composition bias toward acidic residues.

This sequence belongs to the PPR family. P subfamily.

In Arabidopsis thaliana (Mouse-ear cress), this protein is Pentatricopeptide repeat-containing protein At1g73710.